The sequence spans 462 residues: DEK domain-containing chromatin-associated protein 1 (462 aa).

2 disordered regions span residues 18–91 (AVTE…TQGR) and 212–390 (KETK…RKEL). Basic and acidic residues predominate over residues 20–32 (TEKDTETKKKDEV). A compositionally biased stretch (acidic residues) spans 33 to 46 (EKDEAMEEKGEEID). The span at 77–91 (PRSSGNKPLSITQGR) shows a compositional bias: polar residues. The span at 267 to 276 (NGEDDVAPEE) shows a compositional bias: acidic residues. 3 stretches are compositionally biased toward basic and acidic residues: residues 277 to 303 (ENNK…TDKK), 312 to 322 (EKPAAEEEKSI), and 347 to 360 (QKVD…EKGK). The Nuclear localization signal motif lies at 344–351 (SKKQKVDK). The 56-residue stretch at 384 to 439 (EPTRKELHVVVTKILKEVDFNTATLSDILRKLGSHFGIDLMHRKAEVKDIITDAIN) folds into the DEK-C domain. 2 consecutive DNA-binding regions follow at residues 402–416 (DFNT…RKLG) and 431–435 (KDIIT). Positions 438–462 (INEMSDDDDEKEEDTEDEGEKEGKD) are disordered. Residues 441–462 (MSDDDDEKEEDTEDEGEKEGKD) show a composition bias toward acidic residues.

In terms of assembly, found in a mRNA splicing-dependent exon junction complex (EJC). Binds specifically histones H3 and H4.

It is found in the nucleus. The protein localises to the nucleolus. Chromatin-associated protein which contributes to the modulation of chromatin structure (such as super-helical structure of DNA) and function. Binds to chromatin of protein-coding genes throughout the genome to regulate nucleosome occupancy and chromatin accessibility, and to modulate the expression of target genes. This chain is DEK domain-containing chromatin-associated protein 1, found in Arabidopsis thaliana (Mouse-ear cress).